Reading from the N-terminus, the 505-residue chain is Glutamate--tRNA ligase (505 aa).

Positions 12 to 22 (PSPTGPLHIGG) match the 'HIGH' region motif. A 'KMSKS' region motif is present at residues 260-264 (KLSKR). Residue Lys-263 coordinates ATP.

It belongs to the class-I aminoacyl-tRNA synthetase family. Glutamate--tRNA ligase type 1 subfamily. Monomer.

The protein resides in the cytoplasm. It catalyses the reaction tRNA(Glu) + L-glutamate + ATP = L-glutamyl-tRNA(Glu) + AMP + diphosphate. Functionally, catalyzes the attachment of glutamate to tRNA(Glu) in a two-step reaction: glutamate is first activated by ATP to form Glu-AMP and then transferred to the acceptor end of tRNA(Glu). The chain is Glutamate--tRNA ligase from Porphyromonas gingivalis (strain ATCC BAA-308 / W83).